The primary structure comprises 1174 residues: Ribonucleoside-diphosphate reductase large subunit-like protein (1174 aa).

Residues 50–72 (PYVRIMNGVSGIQIGNHNAMSIA) carry the RIP homotypic interaction motif (RHIM) motif. Disordered stretches follow at residues 170 to 269 (ASNA…KLKP) and 291 to 325 (AAAAVAPESESSPAASAPPAAAAMATGGDDEDQSS). Low complexity-rich tracts occupy residues 182-202 (ATSGAGSAAATPAATTPAATA), 233-243 (HVSVGTQATPS), and 291-316 (AAAAVAPESESSPAASAPPAAAAMAT).

Belongs to the ribonucleoside diphosphate reductase large chain family. As to quaternary structure, self-assembles into homo-oligomeric amyloid fibrils. Interacts with host RIPK1 (via RIP homotypic interaction motif); this interaction inhibits RIPK1 ubiquitination thereby preventing effective activation of host NF-kappa-B. Interacts with host RIPK3 (via RIP homotypic interaction motif); this interaction disrupts RIPK3-RIPK1 interactions characteristic of TNF-alpha induced necroptosis, thereby suppressing this death pathway. Interacts (via RIP homotypic interaction motif) with host ZBP1 (via RIP homotypic interaction motif); this interaction inhibits recruitment of RIPK1 and RIPK3 to ZBP1 and prevents ZBP1-induced NF-kappa-B activation. Post-translationally, undergoes proteolytic cleavage, generating two peptides, a N-terminal and a 116 kDa. The N-terminal peptide retains RIPK1- and RIPK3-binding activity as well as cell death suppression activity.

It is found in the virion. The protein resides in the host cytoplasm. Provides optimal viral replication conditions by promoting host cell survival and avoiding the host inflammatory response linked to NF-kappa-B activation. Blocks RIPK1 ubiquitination, thereby preventing NF-kappa-B activation and virally induced inflammatory response. Prevents host necroptosis by targeting RIPK3 thereby preventing the formation of necroptotic RIPK1-RIPK3 complexes. Also inhibits ZBP1-induced necroptosis. Does not have ribonucleotide reductase activity. Betaherpesviruses probably use another strategy to expand the dNTP pool in a quiescent host cell. In Murid herpesvirus 1 (strain Smith) (MuHV-1), this protein is Ribonucleoside-diphosphate reductase large subunit-like protein.